The sequence spans 232 residues: Purine nucleoside phosphorylase DeoD-type (232 aa).

Position 4 (H4) interacts with a purine D-ribonucleoside. Phosphate contacts are provided by residues G20, R24, R43, and 87-90; that span reads RIGT. Residues 179-181 and 203-204 contribute to the a purine D-ribonucleoside site; these read EME and SD. D204 acts as the Proton donor in catalysis.

This sequence belongs to the PNP/UDP phosphorylase family. In terms of assembly, homohexamer; trimer of homodimers.

It catalyses the reaction a purine D-ribonucleoside + phosphate = a purine nucleobase + alpha-D-ribose 1-phosphate. It carries out the reaction a purine 2'-deoxy-D-ribonucleoside + phosphate = a purine nucleobase + 2-deoxy-alpha-D-ribose 1-phosphate. Its function is as follows. Catalyzes the reversible phosphorolytic breakdown of the N-glycosidic bond in the beta-(deoxy)ribonucleoside molecules, with the formation of the corresponding free purine bases and pentose-1-phosphate. The chain is Purine nucleoside phosphorylase DeoD-type from Caldanaerobacter subterraneus subsp. tengcongensis (strain DSM 15242 / JCM 11007 / NBRC 100824 / MB4) (Thermoanaerobacter tengcongensis).